Here is a 105-residue protein sequence, read N- to C-terminus: Large ribosomal subunit protein eL36 (105 aa).

The protein belongs to the eukaryotic ribosomal protein eL36 family. As to quaternary structure, component of the large ribosomal subunit.

It is found in the cytoplasm. The protein resides in the cytosol. Component of the large ribosomal subunit. The ribosome is a large ribonucleoprotein complex responsible for the synthesis of proteins in the cell. This is Large ribosomal subunit protein eL36 (rpl36) from Danio rerio (Zebrafish).